Here is a 327-residue protein sequence, read N- to C-terminus: Ribose operon repressor (327 aa).

The 56-residue stretch at 1-56 (MTTIKQVALEAGVSKSTVSRFIAQNGYVSDEAREKIERAIKKLNFRPNLSAQSLKT) folds into the HTH lacI-type domain. Residues 4–23 (IKQVALEAGVSKSTVSRFIA) constitute a DNA-binding region (H-T-H motif).

In terms of biological role, transcriptional repressor for the ribose rbsDACBK operon. The chain is Ribose operon repressor (rbsR) from Lactococcus lactis subsp. lactis (strain IL1403) (Streptococcus lactis).